Here is a 146-residue protein sequence, read N- to C-terminus: 3-dehydroquinate dehydratase (146 aa).

Tyr22 serves as the catalytic Proton acceptor. Residues Asn74, His80, and Asp87 each contribute to the substrate site. His100 serves as the catalytic Proton donor. Substrate contacts are provided by residues 101-102 and Arg111; that span reads LS.

It belongs to the type-II 3-dehydroquinase family. In terms of assembly, homododecamer.

It catalyses the reaction 3-dehydroquinate = 3-dehydroshikimate + H2O. It participates in metabolic intermediate biosynthesis; chorismate biosynthesis; chorismate from D-erythrose 4-phosphate and phosphoenolpyruvate: step 3/7. Functionally, catalyzes a trans-dehydration via an enolate intermediate. The sequence is that of 3-dehydroquinate dehydratase from Clostridium beijerinckii (strain ATCC 51743 / NCIMB 8052) (Clostridium acetobutylicum).